The sequence spans 518 residues: MTILPKKKPPPPSDPEGNGERSGSGGADSHSRSGARPRSSPPPRWAYPGNPAPPERHPAGTPRPQQASPPPCSGGSGGAGSGPLGEGALGPCCCCTGAGGCCSGPGHSKRRRQGVSAGPGAPGSSPDREDGAGNNSEDEYETAARTQAIDPDTAEQQEHWFEKALQEKKGFIIKQMKEDGACLFRAVADQVYGDQDMHEVVRKHCMDYLMKNADYFSNYVTEDFTTYINRKRKNNCHGNHIEMQAMAEMYNRPVEVYQYGTEPINTFHGIQQNEDEPIRVSYHRNIHYNSVVNPNKATIGVGLGLPSFKPGFAEQSLMKSAIRTSEESWIEQQMLEDKKRATDWEATNEAIEEQVARESYLQWLRDQEKQARQPRKASATCSSATAAASSGLEEWSGRSPRQRSTAGSPEHPDLHAELCMKPPSPAATLMLGKPPSPCAPGPSNQTCAGADRATSPLVSLYPALECRAIMQHMSPTAFGLKDWDDDEILASVLAVSQQEYLDTIKKSTLRRDSSPDHS.

2 disordered regions span residues 1–79 (MTIL…SGGA) and 105–144 (PGHS…ETAA). Residues 39-53 (SSPPPRWAYPGNPAP) show a composition bias toward pro residues. Residues 116 to 125 (SAGPGAPGSS) are compositionally biased toward low complexity. Residues 171–294 (FIIKQMKEDG…NIHYNSVVNP (124 aa)) form the OTU domain. The cys-loop stretch occupies residues 176–182 (MKEDGAC). Residue Asp-179 is part of the active site. Cys-182 serves as the catalytic Nucleophile. The segment at 231–241 (KRKNNCHGNHI) is variable-loop. The tract at residues 282–287 (YHRNIH) is his-loop. His-287 is a catalytic residue. The interval 371–450 (ARQPRKASAT…GPSNQTCAGA (80 aa)) is disordered. Over residues 377-390 (ASATCSSATAAASS) the composition is skewed to low complexity.

This sequence belongs to the peptidase C85 family.

It carries out the reaction Thiol-dependent hydrolysis of ester, thioester, amide, peptide and isopeptide bonds formed by the C-terminal Gly of ubiquitin (a 76-residue protein attached to proteins as an intracellular targeting signal).. Its function is as follows. Deubiquitinating enzyme that may function as negative regulator of the innate immune system. Has peptidase activity towards 'Lys-48'- and 'Lys-63'-linked polyubiquitin chains. Can also cleave 'Lys-11'-linked ubiquitin chains (in vitro). The sequence is that of OTU domain-containing protein 5 (otud5) from Xenopus tropicalis (Western clawed frog).